Reading from the N-terminus, the 532-residue chain is 2,3-bisphosphoglycerate-independent phosphoglycerate mutase (532 aa).

Positions 15 and 65 each coordinate Mn(2+). The active-site Phosphoserine intermediate is Ser-65. Residues His-126, 156–157 (RD), Arg-188, Arg-194, 258–261 (RPDR), and Lys-331 contribute to the substrate site. 5 residues coordinate Mn(2+): Asp-398, His-402, Asp-439, His-440, and His-457.

It belongs to the BPG-independent phosphoglycerate mutase family. In terms of assembly, monomer. The cofactor is Mn(2+).

It carries out the reaction (2R)-2-phosphoglycerate = (2R)-3-phosphoglycerate. It functions in the pathway carbohydrate degradation; glycolysis; pyruvate from D-glyceraldehyde 3-phosphate: step 3/5. In terms of biological role, catalyzes the interconversion of 2-phosphoglycerate and 3-phosphoglycerate. The protein is 2,3-bisphosphoglycerate-independent phosphoglycerate mutase of Microcystis aeruginosa (strain NIES-843 / IAM M-2473).